Reading from the N-terminus, the 141-residue chain is ATP synthase epsilon chain (141 aa).

The protein belongs to the ATPase epsilon chain family. In terms of assembly, F-type ATPases have 2 components, CF(1) - the catalytic core - and CF(0) - the membrane proton channel. CF(1) has five subunits: alpha(3), beta(3), gamma(1), delta(1), epsilon(1). CF(0) has three main subunits: a, b and c.

It localises to the cell inner membrane. Produces ATP from ADP in the presence of a proton gradient across the membrane. The polypeptide is ATP synthase epsilon chain (Dechloromonas aromatica (strain RCB)).